The primary structure comprises 483 residues: V-type proton ATPase subunit H (483 aa).

Phosphoserine is present on residues Ser59 and Ser483.

Belongs to the V-ATPase H subunit family. In terms of assembly, V-ATPase is a heteromultimeric enzyme made up of two complexes: the ATP-hydrolytic V1 complex and the proton translocation V0 complex. The V1 complex consists of three catalytic AB heterodimers that form a heterohexamer, three peripheral stalks each consisting of EG heterodimers, one central rotor including subunits D and F, and the regulatory subunits C and H. The proton translocation complex V0 consists of the proton transport subunit a, a ring of proteolipid subunits c9c'', rotary subunit d, subunits e and f, and the accessory subunits ATP6AP1/Ac45 and ATP6AP2/PRR. Interacts with AP2M1.

It localises to the cytoplasmic vesicle. The protein localises to the clathrin-coated vesicle membrane. Functionally, subunit of the V1 complex of vacuolar(H+)-ATPase (V-ATPase), a multisubunit enzyme composed of a peripheral complex (V1) that hydrolyzes ATP and a membrane integral complex (V0) that translocates protons. V-ATPase is responsible for acidifying and maintaining the pH of intracellular compartments and in some cell types, is targeted to the plasma membrane, where it is responsible for acidifying the extracellular environment. Subunit H is essential for V-ATPase activity, but not for the assembly of the complex. Involved in the endocytosis mediated by clathrin-coated pits, required for the formation of endosomes. In Mus musculus (Mouse), this protein is V-type proton ATPase subunit H (Atp6v1h).